The chain runs to 491 residues: tRNA-2-methylthio-N(6)-dimethylallyladenosine synthase (491 aa).

Positions 3–119 constitute an MTTase N-terminal domain; the sequence is RSYQIRTYGC…LPTLLERARH (117 aa). The [4Fe-4S] cluster site is built by cysteine 12, cysteine 48, cysteine 82, cysteine 156, cysteine 160, and cysteine 163. One can recognise a Radical SAM core domain in the interval 142–372; that stretch reads RESAYSGWVS…IELQNQISWD (231 aa). The 72-residue stretch at 375–446 folds into the TRAM domain; sequence KELVGRSVEL…PHHLVADSEI (72 aa).

The protein belongs to the methylthiotransferase family. MiaB subfamily. As to quaternary structure, monomer. The cofactor is [4Fe-4S] cluster.

It localises to the cytoplasm. It carries out the reaction N(6)-dimethylallyladenosine(37) in tRNA + (sulfur carrier)-SH + AH2 + 2 S-adenosyl-L-methionine = 2-methylsulfanyl-N(6)-dimethylallyladenosine(37) in tRNA + (sulfur carrier)-H + 5'-deoxyadenosine + L-methionine + A + S-adenosyl-L-homocysteine + 2 H(+). In terms of biological role, catalyzes the methylthiolation of N6-(dimethylallyl)adenosine (i(6)A), leading to the formation of 2-methylthio-N6-(dimethylallyl)adenosine (ms(2)i(6)A) at position 37 in tRNAs that read codons beginning with uridine. The chain is tRNA-2-methylthio-N(6)-dimethylallyladenosine synthase from Saccharopolyspora erythraea (strain ATCC 11635 / DSM 40517 / JCM 4748 / NBRC 13426 / NCIMB 8594 / NRRL 2338).